A 195-amino-acid polypeptide reads, in one-letter code: dCTP deaminase (195 aa).

Residues 109–114, D127, 135–137, Y170, K177, and Q181 contribute to the dCTP site; these read RSSLAR and TLE. The active-site Proton donor/acceptor is E137.

It belongs to the dCTP deaminase family. In terms of assembly, homotrimer.

It catalyses the reaction dCTP + H2O + H(+) = dUTP + NH4(+). The protein operates within pyrimidine metabolism; dUMP biosynthesis; dUMP from dCTP (dUTP route): step 1/2. Functionally, catalyzes the deamination of dCTP to dUTP. This chain is dCTP deaminase, found in Rhodospirillum rubrum (strain ATCC 11170 / ATH 1.1.1 / DSM 467 / LMG 4362 / NCIMB 8255 / S1).